The chain runs to 178 residues: NADH-ubiquinone oxidoreductase chain 6 (178 aa).

5 helical membrane passes run 1 to 21 (MMTY…VGFS), 25 to 45 (SPIY…GIVL), 48 to 68 (GGSF…LVVF), 89 to 109 (VLLT…YLLL), and 152 to 172 (YGYW…IVVM).

It belongs to the complex I subunit 6 family.

Its subcellular location is the mitochondrion membrane. It catalyses the reaction a ubiquinone + NADH + 5 H(+)(in) = a ubiquinol + NAD(+) + 4 H(+)(out). In terms of biological role, core subunit of the mitochondrial membrane respiratory chain NADH dehydrogenase (Complex I) that is believed to belong to the minimal assembly required for catalysis. Complex I functions in the transfer of electrons from NADH to the respiratory chain. The immediate electron acceptor for the enzyme is believed to be ubiquinone. The protein is NADH-ubiquinone oxidoreductase chain 6 (MT-ND6) of Pseudosoriculus fumidus (Taiwanese brown-toothed shrew).